Here is a 274-residue protein sequence, read N- to C-terminus: Protein CURLY FLAG LEAF 1 (274 aa).

The tract at residues 17-44 is disordered; sequence SLNGGGGGGGGRRRGRRAAAAEGSDDSE. The EAR motif lies at 47-52; it reads TVELNS. In terms of domain architecture, WW spans 54-88; the sequence is VALPYHWEQCLDIRTGQVYYINWEDGTRTTIDPRS. 2 disordered regions span residues 83 to 133 and 175 to 216; these read TIDP…SGYT and GRDG…SPTD. Composition is skewed to low complexity over residues 87 to 106, 121 to 133, and 184 to 207; these read RSSS…SSSR, AAAA…SGYT, and SSSS…AVSS.

Binds to HDG1.

Negatively regulates the cuticle development probably by interacting with the HD-ZIP IV transcription factor HDG1. This is Protein CURLY FLAG LEAF 1 from Oryza sativa subsp. japonica (Rice).